Here is a 240-residue protein sequence, read N- to C-terminus: ATP synthase subunit a (240 aa).

5 helical membrane passes run L21 to F41, A83 to I103, D116 to V136, L184 to I204, and L207 to L227.

This sequence belongs to the ATPase A chain family. In terms of assembly, F-type ATPases have 2 components, CF(1) - the catalytic core - and CF(0) - the membrane proton channel. CF(1) has five subunits: alpha(3), beta(3), gamma(1), delta(1), epsilon(1). CF(0) has three main subunits: a(1), b(2) and c(9-12). The alpha and beta chains form an alternating ring which encloses part of the gamma chain. CF(1) is attached to CF(0) by a central stalk formed by the gamma and epsilon chains, while a peripheral stalk is formed by the delta and b chains.

The protein localises to the cell membrane. Functionally, key component of the proton channel; it plays a direct role in the translocation of protons across the membrane. This is ATP synthase subunit a from Macrococcus caseolyticus (strain JCSC5402) (Macrococcoides caseolyticum).